The chain runs to 440 residues: Transposon Ty1-DR2 Gag polyprotein (440 aa).

2 stretches are compositionally biased toward polar residues: residues 1–31 and 137–168; these read MESQ…TTQD and VGTH…TNQH. Disordered stretches follow at residues 1 to 75, 137 to 174, and 350 to 440; these read MESQ…PQAA, VGTH…PPPI, and QQES…PGTY. An RNA-binding region spans residues 299–401; sequence NNGIPINNKV…NSQSRTARAH (103 aa). Residues 363-372 are compositionally biased toward basic and acidic residues; it reads SPSDEKKDSR. A compositionally biased stretch (polar residues) spans 373 to 409; it reads TYTNTTKPKSITRNSQKPNNSQSRTARAHNVSTSNNF. Positions 429 to 440 are enriched in basic and acidic residues; it reads NKHDLHLRPGTY.

Homotrimer.

The protein resides in the cytoplasm. Its function is as follows. Capsid protein (CA) is the structural component of the virus-like particle (VLP), forming the shell that encapsulates the retrotransposons dimeric RNA genome. The particles are assembled from trimer-clustered units and there are holes in the capsid shells that allow for the diffusion of macromolecules. CA also has nucleocapsid-like chaperone activity, promoting primer tRNA(i)-Met annealing to the multipartite primer-binding site (PBS), dimerization of Ty1 RNA and initiation of reverse transcription. In Saccharomyces cerevisiae (strain ATCC 204508 / S288c) (Baker's yeast), this protein is Transposon Ty1-DR2 Gag polyprotein (TY1A-DR2).